A 170-amino-acid polypeptide reads, in one-letter code: Peptide deformylase (170 aa).

The Fe cation site is built by Cys-94 and His-136. Glu-137 is an active-site residue. A Fe cation-binding site is contributed by His-140.

It belongs to the polypeptide deformylase family. The cofactor is Fe(2+).

The enzyme catalyses N-terminal N-formyl-L-methionyl-[peptide] + H2O = N-terminal L-methionyl-[peptide] + formate. Its function is as follows. Removes the formyl group from the N-terminal Met of newly synthesized proteins. Requires at least a dipeptide for an efficient rate of reaction. N-terminal L-methionine is a prerequisite for activity but the enzyme has broad specificity at other positions. In Agrobacterium fabrum (strain C58 / ATCC 33970) (Agrobacterium tumefaciens (strain C58)), this protein is Peptide deformylase.